A 344-amino-acid polypeptide reads, in one-letter code: WW domain binding protein 1-like (344 aa).

The helical transmembrane segment at L42–H62 threads the bilayer. 2 disordered regions span residues L132–G250 and C302–P321. Residues P145–S173 show a composition bias toward low complexity. S173 carries the post-translational modification Phosphoserine. Residues L212 to S228 are compositionally biased toward basic and acidic residues.

The protein resides in the membrane. In Rattus norvegicus (Rat), this protein is WW domain binding protein 1-like (Wbp1l).